Consider the following 391-residue polypeptide: MSVIKMADLDLAGKRLFIRADLNVPVKDGKVTSDARIRATIPTLKLALQKGAKVMVTSHLGRPTEGVFEEANSLQPVVDYLNASDLGVPVRLVRDYLDGVEVAENEIVVLENVRINKGEKKNDPELAKKYAALCDVFVMDAFGTAHRAEGSTYGVAEYAPVACAGPLLAAELDALGKALKEPQRPMLAIVGGSKVSTKLTVLDSLSKIADQLIVGGGIANTFIAAEGHPVGKSLYEADLIPEAKRLAAATNIPVPVDVRVGTEFSEIAPATEKAVSEVQADESIFDIGDKSAEELANIIKSAKTILWNGPVGVFEFPNFRKGTEVISNAIAEATANGAFSIAGGGDTLAAIDLFGIADKISYISTGGGAFLEFVEGKVLPAVEILEKRANG.

Substrate contacts are provided by residues 21 to 23 (DLN), Arg-36, 59 to 62 (HLGR), Arg-114, and Arg-147. Residues Lys-198, Glu-315, and 344–347 (GGDT) contribute to the ATP site.

The protein belongs to the phosphoglycerate kinase family. As to quaternary structure, monomer.

It localises to the cytoplasm. It catalyses the reaction (2R)-3-phosphoglycerate + ATP = (2R)-3-phospho-glyceroyl phosphate + ADP. Its pathway is carbohydrate degradation; glycolysis; pyruvate from D-glyceraldehyde 3-phosphate: step 2/5. The sequence is that of Phosphoglycerate kinase from Actinobacillus pleuropneumoniae serotype 5b (strain L20).